A 353-amino-acid polypeptide reads, in one-letter code: Phosphate acyltransferase (353 aa).

Belongs to the PlsX family. As to quaternary structure, homodimer. Probably interacts with PlsY.

It is found in the cytoplasm. It carries out the reaction a fatty acyl-[ACP] + phosphate = an acyl phosphate + holo-[ACP]. It functions in the pathway lipid metabolism; phospholipid metabolism. Functionally, catalyzes the reversible formation of acyl-phosphate (acyl-PO(4)) from acyl-[acyl-carrier-protein] (acyl-ACP). This enzyme utilizes acyl-ACP as fatty acyl donor, but not acyl-CoA. The polypeptide is Phosphate acyltransferase (Rhodopseudomonas palustris (strain BisB18)).